The sequence spans 177 residues: Large ribosomal subunit protein uL6 (177 aa).

Position 44 is an N6-acetyllysine (K44).

It belongs to the universal ribosomal protein uL6 family. In terms of assembly, part of the 50S ribosomal subunit.

This protein binds to the 23S rRNA, and is important in its secondary structure. It is located near the subunit interface in the base of the L7/L12 stalk, and near the tRNA binding site of the peptidyltransferase center. The sequence is that of Large ribosomal subunit protein uL6 from Shigella sonnei (strain Ss046).